The following is a 1288-amino-acid chain: MASSSGDSVTRRSVASQFFTQEEGPSIDGMTTSERVVDLLNQAALITNDSKITVLKQVQELIINKDPTLLDNFLDEIIAFQADKSIEVRKFVIGFIEEACKRDIELLLKLIANLNMLLRDENVNVVKKAILTMTQLYKVALQWMVKSRVISDLQEACWDMVSSMAGEIILLLDSDNDGIRTHAIKFVEGLIVTLSPRMADSEVPRRQEHDISLDRIPRDHPYIQYNVLWEEGKAAVEQLLKFMVHPAISSINLTTALGSLANIARQRPMFMSEVIQAYETLHANLPPTLAKSQVSSVRKNLKLHLLSVLKHPASLEFQAQITTLLVDLGTPQAEIARNMPSSKDSRKRPRDDTDSTLKKMKLEPNLGEDDEDKDLEPGPSGTSKASAQISGQSDTDITAEFLQPLLTPDNVANLVLISMVYLPETMPASFQAIYTPVESAGTEAQIKHLARLMATQMTAAGLGPGVEQTKQCKEEPKEEKVVKPESVLIKRRLSVQGQAISVVGSQSTMSPLEEEVPQAKRRPEPIIPVTQPRLAGAGGRKKIFRLSDVLKPLTDAQVEAMKLGAVKRILRAEKAVACSGAAQVRIKILASLVTQFDSGFKAEVLSFILEDVRARLDLAFAWLYQEYNAYLAAGTSGTLDKYEDCLICLLSGLQEKPDQKDGIFTKVVLEAPLITESALEVIRKYCEDESRAYLGMSTLGDLIFKRPSRQFQYLHVLLDLSSHEKDRVRSQALLFIKRMYEKEQLREYVEKFALNYLQLLVHPNPPSVLFGADKDTEVAAPWTEETVKQCLYLYLALLPQNHKLIHELAAVYTEAIADIKRTVLRVIEQPIRGMGMNSPELLLLVENCPKGAETLVTRCLHSLTDKVPPSPELVKRVRDLYHKRLPDVRFLIPVLNGLEKKEVIQALPKLIKLNPIVVKEVFNRLLGTQHGEGNSALSPLNPGELLIALHNIDSVKCDMKSIIKATNLCFAERNVYTSEVLAVVMQQLMEQSPLPMLLMRTVIQSLTMYPRLGGFVMNILARLIMKQVWKYPKVWEGFIKCCQRTKPQSFQVILQLPPQQLGAVFDKCPELREPLLAHVRSFTPHQQAHIPNSIMTILEATGKQEPEVKEAPSGPLEEDDLEPLALALAPAPAPAPAPAPAPAPAPRPPQDLIGLRLAQEKALKRQLEEEQKQKPTGIGAPAACVSSTPSVPAAARAGPTPAEEVMEYREEGPECETPAIFISMDDDSGLAETTLLDSSLEGPLPKEAAAVGSSSKDERSPQNLSHAVEEALKTSSPETREPESKGNS.

The segment at Met-1 to Asn-124 is interaction with HSF1. A Phosphoserine modification is found at Ser-13. HEAT repeat units lie at residues Thr-31–Asn-64, Pro-67–Lys-101, Ile-104–Lys-146, Leu-153–Val-192, and Val-227–Gln-266. Residues Ile-335–Gln-392 are disordered. Residues Ser-345–Met-360 carry the Nuclear localization signal motif. Residues Pro-349–Leu-362 are compositionally biased toward basic and acidic residues. Residue Lys-361 forms a Glycyl lysine isopeptide (Lys-Gly) (interchain with G-Cter in SUMO1); alternate linkage. Residue Lys-361 forms a Glycyl lysine isopeptide (Lys-Gly) (interchain with G-Cter in SUMO2); alternate linkage. The segment covering Ser-380–Gln-392 has biased composition (polar residues). Residue Lys-483 forms a Glycyl lysine isopeptide (Lys-Gly) (interchain with G-Cter in SUMO2) linkage. A Phosphoserine modification is found at Ser-494. Disordered regions lie at residues Pro-1130–Asp-1151 and Leu-1163–Ser-1288. The span at Ala-1131 to Pro-1149 shows a compositional bias: pro residues. Over residues Leu-1163–Gln-1173 the composition is skewed to basic and acidic residues. 2 positions are modified to phosphoserine: Ser-1238 and Ser-1239. Lys-1256 is covalently cross-linked (Glycyl lysine isopeptide (Lys-Gly) (interchain with G-Cter in SUMO1)). At Ser-1260 the chain carries Phosphoserine. Positions Ala-1267–Ser-1288 are enriched in basic and acidic residues. Phosphothreonine is present on Thr-1274. Ser-1276 bears the Phosphoserine mark.

This sequence belongs to the Symplekin family. In terms of assembly, found in a heat-sensitive complex at least composed of several cleavage and polyadenylation specific and cleavage stimulation factors. Interacts with CPSF2, CPSF3 and CSTF2. Interacts (via N-terminus) with HSF1; this interaction is direct and occurs upon heat shock. Interacts with SSU72.

The protein localises to the cytoplasm. Its subcellular location is the cytoskeleton. It localises to the cell junction. The protein resides in the tight junction. It is found in the cell membrane. The protein localises to the nucleus. Its subcellular location is the nucleoplasm. In terms of biological role, scaffold protein that functions as a component of a multimolecular complex involved in histone mRNA 3'-end processing. Specific component of the tight junction (TJ) plaque, but might not be an exclusively junctional component. May have a house-keeping rule. Is involved in pre-mRNA polyadenylation. Enhances SSU72 phosphatase activity. This chain is Symplekin (Sympk), found in Mus musculus (Mouse).